The sequence spans 325 residues: Heat-inducible transcription repressor HrcA (325 aa).

This sequence belongs to the HrcA family.

Its function is as follows. Negative regulator of class I heat shock genes (grpE-dnaK-dnaJ and groELS operons). Prevents heat-shock induction of these operons. The chain is Heat-inducible transcription repressor HrcA from Staphylococcus aureus (strain bovine RF122 / ET3-1).